The primary structure comprises 268 residues: Microtubule-associated protein RP/EB family member 1 (268 aa).

At Ala2 the chain carries N-acetylalanine. The region spanning 14–116 is the Calponin-homology (CH) domain; that stretch reads NLSRHDMLAW…FVQWFKKFFD (103 aa). Residue Lys66 is modified to N6-crotonyllysine. Position 124 is a phosphotyrosine (Tyr124). Residues 124 to 268 are interaction with MTUS2/TIP150; it reads YDPVAARQGQ…GGPQEEQEEY (145 aa). Residues 146–191 form a disordered region; the sequence is LSKPKKPLGSGSAAPQRPIATQRTTAAPKAGPGMVRKNPGMGNGDD. Ser155 is subject to Phosphoserine. Residues 185 to 255 form the EB1 C-terminal domain; the sequence is GMGNGDDEAA…LYATDEGFVI (71 aa). Positions 206–211 are interaction with APC; it reads TVEDLE. The DCTN1-binding stretch occupies residues 208-268; the sequence is EDLEKERDFY…GGPQEEQEEY (61 aa). Lys220 is subject to N6-acetyllysine. An APC-binding region spans residues 220–242; the sequence is KLRNIELICQENEGENDPVLQRI. Positions 232–255 are interaction with SKA1; the sequence is EGENDPVLQRIVDILYATDEGFVI.

The protein belongs to the MAPRE family. As to quaternary structure, homodimer. Heterodimer with MAPRE3. Interacts with DCTN1, DCTN2, TERF1 and dynein intermediate chain. Interaction with DIAPH1 and DIAPH2. Interacts (via C-terminal residues 206-211) with APC (via C-terminal residues 2674-2845); the interaction inhibits association with and bundling of F-actin. Interacts with CLASP2, DST, KIF2C and STIM1; probably required for their targeting to the growing microtubule plus ends. Interacts with MTUS2; interaction is direct and probably targets MTUS2 to microtubules. Interacts (via C-terminus) with SKA1 (via SXIP motif); the interaction is direct and stabilizes the kinetochore-microtubule attachment of the SKA1 complex. Interacts with APC2. Interacts with CLASP1. Interacts with CDK5RAP2. According to another report, MAPRE1 does not interact with CDK5RAP2. Interacts with MACF1. Interacts with RABL2/RABL2A; binds preferentially to GTP-bound RABL2. Interacts with KCNAB2. Interacts (via C-terminus) with CLIP1. Interacts with SLAIN2 and SLAIN1. Interacts with KIF18B; this interaction is required for efficient accumulation of KIF18B at microtubule plus ends. Interacts with MISP. Interacts with KNSTRN. Interacts with NCKAP5L. Interacts with AKAP9. Interacts with PDE4DIP; this interaction, which is PDE4DIP isoform-specific, is required for its recruitment to the Golgi apparatus. Interacts with CAMSAP2. May form a pericentrosomal complex with AKAP9, CDK5RAP2 and PDE4DIP isoform 2/MMG8/SMYLE; within this complex, MAPRE1 binding to CDK5RAP2 may be mediated by PDE4DIP. Contrary to other mammalian species, does not interact with CDK5RAP2, possibly due to the lack of conservation of the MAPRE1-binding motif in rat CDK5RAP2. Interacts with AKNA. Interacts with GAS2L1, GAS2L2, and GAS2L3. Interacts with RARRES1 and AGBL2. In terms of processing, acetylation at Lys-220 by KAT2B/PCAF promotes dynamic kinetochore-microtubule interactions in early mitosis. Crotonylated by KAT5 during mitosis, promoting astral microtubule plasticity and dynamic connection between astral microtubules and the cortex during mitotic chromosome segregation, thereby ensuring accurate spindle positioning in mitosis. Decrotonylated by HDAC3.

The protein resides in the cytoplasm. The protein localises to the cytoskeleton. Its subcellular location is the microtubule organizing center. It is found in the centrosome. It localises to the golgi apparatus. The protein resides in the spindle. The protein localises to the spindle pole. In terms of biological role, plus-end tracking protein (+TIP) that binds to the plus-end of microtubules and regulates the dynamics of the microtubule cytoskeleton. Recruits other +TIP proteins to microtubules by binding to a conserved Ser-X-Leu-Pro (SXLP) motif in their polypeptide chains. Promotes cytoplasmic microtubule nucleation and elongation. Involved in mitotic spindle positioning by stabilizing microtubules and promoting dynamic connection between astral microtubules and the cortex during mitotic chromosome segregation. Assists chromosome alignment in metaphase by recruiting the SKA complex to the spindle and stabilizing its interactions with microtubule bundles (K-fibers). Also acts as a regulator of minus-end microtubule organization: interacts with the complex formed by AKAP9 and PDE4DIP, leading to recruit CAMSAP2 to the Golgi apparatus, thereby tethering non-centrosomal minus-end microtubules to the Golgi, an important step for polarized cell movement. Promotes elongation of CAMSAP2-decorated microtubule stretches on the minus-end of microtubules. Acts as a regulator of autophagosome transport via interaction with CAMSAP2. Functions downstream of Rho GTPases and DIAPH1 in stable microtubule formation. May play a role in cell migration. This chain is Microtubule-associated protein RP/EB family member 1 (Mapre1), found in Rattus norvegicus (Rat).